The primary structure comprises 164 residues: Kunitz-type serine protease inhibitor BbKI (164 aa).

It belongs to the protease inhibitor I3 (leguminous Kunitz-type inhibitor) family. In terms of assembly, monomer.

It localises to the secreted. Its function is as follows. Inhibits bovine trypsin, human plasma kallikrein and plasmin and weakly bovine chymotrypsin. In Bauhinia bauhinioides (Perlebia bauhinoides), this protein is Kunitz-type serine protease inhibitor BbKI.